A 126-amino-acid chain; its full sequence is RutC family protein bbp_334 (126 aa).

The protein belongs to the RutC family.

This chain is RutC family protein bbp_334, found in Buchnera aphidicola subsp. Baizongia pistaciae (strain Bp).